We begin with the raw amino-acid sequence, 583 residues long: Aspartate--tRNA(Asp/Asn) ligase (583 aa).

Residue Glu173 coordinates L-aspartate. Residues 197–200 form an aspartate region; the sequence is QMFK. Arg219 provides a ligand contact to L-aspartate. Residues 219 to 221 and Gln228 contribute to the ATP site; that span reads RDE. His447 is an L-aspartate binding site. Glu481 contributes to the ATP binding site. Arg488 contacts L-aspartate. 533–536 contacts ATP; the sequence is GLDR.

The protein belongs to the class-II aminoacyl-tRNA synthetase family. Type 1 subfamily. In terms of assembly, homodimer.

It localises to the cytoplasm. The enzyme catalyses tRNA(Asx) + L-aspartate + ATP = L-aspartyl-tRNA(Asx) + AMP + diphosphate. In terms of biological role, aspartyl-tRNA synthetase with relaxed tRNA specificity since it is able to aspartylate not only its cognate tRNA(Asp) but also tRNA(Asn). Reaction proceeds in two steps: L-aspartate is first activated by ATP to form Asp-AMP and then transferred to the acceptor end of tRNA(Asp/Asn). In Elusimicrobium minutum (strain Pei191), this protein is Aspartate--tRNA(Asp/Asn) ligase.